The following is a 203-amino-acid chain: Ras-related protein Rab-24 (203 aa).

Tyr-17 is modified (phosphotyrosine). Residues Gly-19, Lys-20, Thr-21, and Thr-40 each coordinate GTP. Residues Thr-21, Thr-40, and Asp-63 each coordinate Mg(2+). The switch I stretch occupies residues 30-45; the sequence is DRFLVGPYQNTIGAAF. Residues 63–80 are switch II; sequence DTAGSERYEAMSRIYYRG. Gly-66, Lys-121, Asp-123, and Lys-156 together coordinate GTP. A Phosphotyrosine modification is found at Tyr-172. Residues Cys-200 and Cys-201 are each lipidated (S-geranylgeranyl cysteine).

This sequence belongs to the small GTPase superfamily. Rab family. Interacts with ZFYVE20. Does not interact with the GDP dissociation inhibitors ARHGDIA and ARHGDIB. Mg(2+) is required as a cofactor. In terms of processing, prenylated; prenylation is required for RAB24 localization to autophagosomes. Isoprenylation is inefficient compared to other Rab family members. Phosphorylated at Tyr-17 and Tyr-172. Cytosolic pool of RAB24 is more phosphorylated than the membrane-associated pool. In terms of tissue distribution, widely expressed, with highest expression in brain.

Its subcellular location is the cytoplasm. It is found in the cytosol. The protein resides in the membrane. It localises to the cytoplasmic vesicle. The protein localises to the autophagosome membrane. Its subcellular location is the perinuclear region. It is found in the cytoskeleton. The protein resides in the spindle. The catalysed reaction is GTP + H2O = GDP + phosphate + H(+). Regulated by guanine nucleotide exchange factors (GEFs) which promote the exchange of bound GDP for free GTP. Regulated by GTPase activating proteins (GAPs) which increase the GTP hydrolysis activity. Inhibited by GDP dissociation inhibitors (GDIs). In terms of biological role, the small GTPases Rab are key regulators of intracellular membrane trafficking, from the formation of transport vesicles to their fusion with membranes. Rabs cycle between an inactive GDP-bound form and an active GTP-bound form that is able to recruit to membranes different sets of downstream effectors directly responsible for vesicle formation, movement, tethering and fusion. RAB24 is an atypical RAB protein that presents low GTPase activity and thereby exists predominantly in the GTP-bound active state. RAB24 is required for the clearance of late autophagic vacuoles under basal conditions. It is not needed for starvation-induced autophagy. Involved in the modulation of meiotic apparatus assembly and meiotic progression during oocyte maturation, possibly through regulation of kinetochore-microtubule interaction. In Mus musculus (Mouse), this protein is Ras-related protein Rab-24.